We begin with the raw amino-acid sequence, 153 residues long: Glucose-6-phosphate 1-dehydrogenase (153 aa).

2 residues coordinate NADP(+): Arg21 and Lys120. Lys120 lines the D-glucose 6-phosphate pocket.

This sequence belongs to the glucose-6-phosphate dehydrogenase family.

The protein resides in the cytoplasm. It is found in the cytosol. It catalyses the reaction D-glucose 6-phosphate + NADP(+) = 6-phospho-D-glucono-1,5-lactone + NADPH + H(+). Its pathway is carbohydrate degradation; pentose phosphate pathway; D-ribulose 5-phosphate from D-glucose 6-phosphate (oxidative stage): step 1/3. In terms of biological role, cytosolic glucose-6-phosphate dehydrogenase that catalyzes the first and rate-limiting step of the oxidative branch within the pentose phosphate pathway/shunt, an alternative route to glycolysis for the dissimilation of carbohydrates and a major source of reducing power and metabolic intermediates for fatty acid and nucleic acid biosynthetic processes. This Drosophila simulans (Fruit fly) protein is Glucose-6-phosphate 1-dehydrogenase (Zw).